A 286-amino-acid chain; its full sequence is Ribose-phosphate pyrophosphokinase (286 aa).

ATP-binding positions include aspartate 34–glutamate 36 and arginine 91–histidine 93. Mg(2+) is bound by residues histidine 124 and aspartate 161. The active site involves lysine 184. Residues arginine 186, aspartate 210, and serine 214–threonine 218 each bind D-ribose 5-phosphate.

This sequence belongs to the ribose-phosphate pyrophosphokinase family. Class III (archaeal) subfamily. As to quaternary structure, homodimer. Requires Mg(2+) as cofactor.

Its subcellular location is the cytoplasm. It catalyses the reaction D-ribose 5-phosphate + ATP = 5-phospho-alpha-D-ribose 1-diphosphate + AMP + H(+). It functions in the pathway metabolic intermediate biosynthesis; 5-phospho-alpha-D-ribose 1-diphosphate biosynthesis; 5-phospho-alpha-D-ribose 1-diphosphate from D-ribose 5-phosphate (route I): step 1/1. Functionally, involved in the biosynthesis of the central metabolite phospho-alpha-D-ribosyl-1-pyrophosphate (PRPP) via the transfer of pyrophosphoryl group from ATP to 1-hydroxyl of ribose-5-phosphate (Rib-5-P). The chain is Ribose-phosphate pyrophosphokinase from Thermoplasma volcanium (strain ATCC 51530 / DSM 4299 / JCM 9571 / NBRC 15438 / GSS1).